Reading from the N-terminus, the 287-residue chain is Uroporphyrinogen-III C-methyltransferase (287 aa).

Polar residues predominate over residues 1–10; that stretch reads MAGKTVTNGA. The disordered stretch occupies residues 1-24; the sequence is MAGKTVTNGAAQGKAARSGADGAV. Residues Pro40, 116-118, Thr146, and Met199 each bind S-adenosyl-L-methionine; that span reads GGD.

This sequence belongs to the precorrin methyltransferase family.

It carries out the reaction uroporphyrinogen III + 2 S-adenosyl-L-methionine = precorrin-2 + 2 S-adenosyl-L-homocysteine + H(+). Its pathway is porphyrin-containing compound metabolism; siroheme biosynthesis; precorrin-2 from uroporphyrinogen III: step 1/1. Its function is as follows. Catalyzes the methylation of both C-2 and C-7 of uroporphyrinogen III leading to precorrin-1 and precorrin-2; their oxidative esterification gives respectively factor I octamethyl ester and sirohydrochlorin. Inactivation of uroporphyrinogen-III methyltransferase results in the loss of nitrite and nitric oxide reductase activities, but not of nitrous oxide reductase activity. Likely involved in heme D1 biosynthesis. The protein is Uroporphyrinogen-III C-methyltransferase (nirE) of Paracoccus denitrificans (strain Pd 1222).